The following is a 264-amino-acid chain: tRNA pseudouridine synthase A (264 aa).

Asp-51 acts as the Nucleophile in catalysis. Tyr-109 contributes to the substrate binding site.

The protein belongs to the tRNA pseudouridine synthase TruA family. In terms of assembly, homodimer.

The enzyme catalyses uridine(38/39/40) in tRNA = pseudouridine(38/39/40) in tRNA. Functionally, formation of pseudouridine at positions 38, 39 and 40 in the anticodon stem and loop of transfer RNAs. The chain is tRNA pseudouridine synthase A from Staphylococcus aureus (strain MRSA252).